A 575-amino-acid polypeptide reads, in one-letter code: Sclareol synthase, chloroplastic (575 aa).

A chloroplast-targeting transit peptide spans 1-51 (MSLAFNVGVTPFSGQRVGSRKEKFPVQGFPVTTPNRSRLIVNCSLTTIDFM). Asp-329, Asp-333, Asn-473, Ser-477, and Glu-481 together coordinate Mg(2+). Residues 329-333 (DDFFD) carry the DDXXD motif motif.

Belongs to the terpene synthase family.

It localises to the plastid. The protein resides in the chloroplast. It catalyses the reaction 8-hydroxycopalyl diphosphate + H2O = sclareol + diphosphate. It functions in the pathway secondary metabolite biosynthesis; terpenoid biosynthesis. In terms of biological role, involved in the biosynthesis of labdane-type diterpenoid including sclareol, a diterpene-diol that is used as fragrance and flavoring, and has anticancer effects (able to kill leukemic and colon cancer cells by apoptosis). Sclareol can also be used as synthesis precursor of ambergris substitution fragance products such as ambrox. Terpene synthase that catalyzes the conversion of 8-hydroxy-copalyl diphosphate to sclareol. This chain is Sclareol synthase, chloroplastic, found in Salvia sclarea (Clary sage).